We begin with the raw amino-acid sequence, 519 residues long: Transcription factor STP1 (519 aa).

The segment at 16-35 (IPGKIYAFFRELVSGVIISK) is i. A compositionally biased stretch (basic and acidic residues) spans 47–61 (ATKEEGKDAADEEKT). Disordered regions lie at residues 47 to 69 (ATKE…FPES) and 115 to 150 (LLGS…EHST). The II stretch occupies residues 65-97 (LFPESNNIDRSLNGGCSVIPCSMDVSDLNTPIS). The segment covering 131 to 146 (STGVTSSPLSPSGSTP) has biased composition (low complexity). The segment at 160 to 182 (FICHYCDATFRIRGYLTRHIKKH) adopts a C2H2-type 1 zinc-finger fold. The C2H2-type 2; atypical zinc finger occupies 188-223 (YHCPFFNSATPPDLRCHNSGGFSRRDTYKTHLKARH). The C2H2-type 3; atypical zinc-finger motif lies at 240-265 (GHCAQCGEYFSTIENFVENHIESGDC). The segment at 357-382 (IKKKQQQVSGSTVTTPEVATQNNQEV) is disordered. A compositionally biased stretch (polar residues) spans 364-381 (VSGSTVTTPEVATQNNQE).

In terms of assembly, interacts (via Region II) with SSY5; protease component of the SPS-sensor. Post-translationally, phosphorylated by casein kinase I. Phosphorylation is not dependent on the extracellular amino acid levels, but is a prerequisite for proteolytic processing. Activated by the amino acid-induced proteolytic removal of an N-terminal inhibitory domain by serine protease SSY5, an intrinsic component of the SPS-sensor. Processing requires at least 2 components of the SCF(GRR1) ubiquitin ligase complex, namely the F-box protein GRR1 and the E2 enzyme CDC34, but does not depend on the proteasome. Processing is negatively regulated by the protein phosphatase 2A regulatory subunit RTS1.

The protein resides in the cell membrane. Its subcellular location is the nucleus. Transcription factor involved in the regulation of gene expression in response to extracellular amino acid levels. Synthesized as latent cytoplasmic precursor, which, upon a signal initiated by the plasma membrane SPS (SSY1-PTR3-SSY5) amino acid sensor system, becomes proteolytically activated and relocates to the nucleus, where it induces the expression of SPS-sensor-regulated genes, including the amino-acid permeases AGP1, BAP2, BAP3 and GNP1. Binding to promoters is facilitated by DAL81. Involved in the repression of genes subject to nitrogen catabolite repression and genes involved in stress response. Negatively regulated by inner nuclear membrane proteins ASI1, ASI2 and ASI3, which prevent unprocessed precursor forms that escape cytoplasmic anchoring from inducing SPS-sensor-regulated genes. May be involved in pre-tRNA splicing. The chain is Transcription factor STP1 (STP1) from Saccharomyces cerevisiae (strain RM11-1a) (Baker's yeast).